Reading from the N-terminus, the 618-residue chain is MDLNGECKGGDGFIDRSRVRILLCDNDSTSLGEVFTLLSECSYQVTAVKSARQVIDALNAEGPDIDIILAEIDLPMAKGMKMLRYITRDKDLRRIPVIMMSRQDEVPVVVKCLKLGAADYLVKPLRTNELLNLWTHMWRRRRMLGLAEKNMLSYDFDLVGSDQSDPNTNSTNLFSDDTDDRSLRSTNPQRGNLSHQENEWSVATAPVHARDGGLGADGTATSSLAVTAIEPPLDHLAGSHHEPMKRNSNPAQFSSAPKKSRLKIGESSAFFTYVKSTVLRTNGQDPPLVDGNGSLHLHRGLAEKFQVVASEGINNTKQARRATPKSTVLRTNGQDPPLVNGNGSHHLHRGAAEKFQVVASEGINNTKQAHRSRGTEQYHSQGETLQNGASYPHSLERSRTLPTSMESHGRNYQEGNMNIPQVAMNRSKDSSQVDGSGFSAPNAYPYYMHGVMNQVMMQSAAMMPQYGHQIPHCQPNHPNGMTGYPYYHHPMNTSLQHSQMSLQNGQMSMVHHSWSPAGNPPSNEVRVNKLDRREEALLKFRRKRNQRCFDKKIRYVNRKRLAERRPRVKGQFVRKMNGVNVDLNGQPDSADYDDEEEEEEEEEEENRDSSPQDDALGT.

The Response regulatory domain maps to 20 to 138 (RILLCDNDST…ELLNLWTHMW (119 aa)). Composition is skewed to polar residues over residues 161–174 (SDQS…TNLF), 187–200 (NPQR…ENEW), 246–257 (RNSNPAQFSSAP), 324–334 (PKSTVLRTNGQ), and 375–389 (TEQY…QNGA). Disordered stretches follow at residues 161-200 (SDQS…ENEW), 239-260 (SHHE…PKKS), 316-338 (TKQA…DPPL), 368-395 (QAHR…PHSL), and 573-618 (VRKM…ALGT). One can recognise a CCT domain in the interval 533–575 (REEALLKFRRKRNQRCFDKKIRYVNRKRLAERRPRVKGQFVRK). Residues 588–610 (DSADYDDEEEEEEEEEEENRDSS) adopt a coiled-coil conformation. Residues 590-606 (ADYDDEEEEEEEEEEEN) show a composition bias toward acidic residues.

It belongs to the ARR-like family. Interacts with PIF1, PIL2, PIF3, PIF4, PIL5, PIL6, ABI3 (via C-terminus), ADO1/ZTL, ADO2, APRR3 and TCP21/CHE. Both the phosphorylated and the dephosphorylated forms interact with ADO1/ZLT. In terms of processing, phosphorylated; during the day. Phosphorylation is required for optimal interaction with APRR3. In terms of tissue distribution, expressed in leaves, flowers and siliques. Restricted to the vasculature.

The protein resides in the nucleus. Controls photoperiodic flowering response. Component of the circadian clock. Expression of several members of the ARR-like family is controlled by circadian rhythm. The particular coordinated sequential expression of APRR9, APRR7, APRR5, APRR3 and APPR1 result to circadian waves that may be at the basis of the endogenous circadian clock. Positive regulator of CCA1 and LHY expression. The sequence is that of Two-component response regulator-like APRR1 (APRR1) from Arabidopsis thaliana (Mouse-ear cress).